Consider the following 241-residue polypeptide: Phosphoribosylaminoimidazole-succinocarboxamide synthase (241 aa).

The protein belongs to the SAICAR synthetase family.

It carries out the reaction 5-amino-1-(5-phospho-D-ribosyl)imidazole-4-carboxylate + L-aspartate + ATP = (2S)-2-[5-amino-1-(5-phospho-beta-D-ribosyl)imidazole-4-carboxamido]succinate + ADP + phosphate + 2 H(+). The protein operates within purine metabolism; IMP biosynthesis via de novo pathway; 5-amino-1-(5-phospho-D-ribosyl)imidazole-4-carboxamide from 5-amino-1-(5-phospho-D-ribosyl)imidazole-4-carboxylate: step 1/2. This chain is Phosphoribosylaminoimidazole-succinocarboxamide synthase, found in Deinococcus geothermalis (strain DSM 11300 / CIP 105573 / AG-3a).